Consider the following 161-residue polypeptide: Nucleotide-binding protein BamMC406_2474 (161 aa).

The protein belongs to the YajQ family.

Its function is as follows. Nucleotide-binding protein. The protein is Nucleotide-binding protein BamMC406_2474 of Burkholderia ambifaria (strain MC40-6).